We begin with the raw amino-acid sequence, 667 residues long: Protein OS-9 (667 aa).

A signal peptide spans 1–25; that stretch reads MAAETLLSSLLGLLLLGLLLPASLT. An MRH domain is found at 108-230; sequence APCLLKTKDW…TIRTPRLCPH (123 aa). Cysteines 110 and 123 form a disulfide. Residues Trp-117, Trp-118, and Gln-130 each contribute to the a mannooligosaccharide derivative site. The N-linked (GlcNAc...) asparagine glycan is linked to Asn-177. Cystine bridges form between Cys-181/Cys-216 and Cys-196/Cys-228. Positions 182, 188, 212, and 218 each coordinate a mannooligosaccharide derivative. Disordered regions lie at residues 284-355, 372-452, 464-483, 504-540, and 633-667; these read WSET…NNVQ, LKGG…RDRL, LENIIQETEKELDPDGLKKE, LEEKQSPELVKKHKKKRVVPKKPPPSPQPTEEDPEHR, and AQKERQRQKELESNYRRVWGSPGGEGTGDLDEFDF. Basic and acidic residues-rich tracts occupy residues 302–311 and 396–412; these read TKDDSKDSDF and PQREPEKERGDPERQRE. Over residues 413–429 the composition is skewed to acidic residues; sequence MEEEEDEDEDEDEDEDE. Residues 430–452 show a composition bias toward basic and acidic residues; sequence RQLLGEFEKELEGILLPSDRDRL. Residues 504 to 513 show a composition bias toward basic and acidic residues; sequence LEEKQSPELV. Residues 514–523 are compositionally biased toward basic residues; the sequence is KKHKKKRVVP. Over residues 633-647 the composition is skewed to basic and acidic residues; that stretch reads AQKERQRQKELESNY.

The protein belongs to the OS-9 family. Component of the HRD1 complex, which comprises at least SYNV1/HRD1, DERL1/2, FAM8A1, HERPUD1/HERP, OS9, SEL1L and UBE2J1. FAM8A1 is stabilized by interaction with SYNV1, which prevents its proteasomal degradation. OS9 and UBE2J1 recruitment to the complex may be mediated by SEL1L. Through this complex, may interact with ERLEC1 and HSPA5. Interacts (via C-terminus) with CPNE6 (via second C2 domain); this interaction occurs in a calcium-dependent manner in vitro. Interacts with CREB3. Post-translationally, intramolecular disulfide bonds. In terms of processing, isoform 1 and isoform 2 are N-glycosylated. As to expression, ubiquitously expressed. Found as well in all tumor cell lines analyzed, amplified in sarcomas. Highly expressed in osteosarcoma SJSA-1 and rhabdomyosarcoma Rh30 cell lines. In terms of tissue distribution, isoform 2 is the major isoform detected in all cell types examined.

It localises to the endoplasmic reticulum lumen. In terms of biological role, lectin component of the HRD1 complex, which functions in endoplasmic reticulum (ER) quality control and ER-associated degradation (ERAD). Specifically recognizes and binds improperly folded glycoproteins as well as hyperglycosylated proteins, retain them in the ER, and transfers them to the ubiquitination machinery and promote their degradation. Possible targets include TRPV4 as well as hyperglycosylated HSP90B1. The protein is Protein OS-9 (OS9) of Homo sapiens (Human).